The primary structure comprises 104 residues: Replication factor A protein 3 (104 aa).

This sequence belongs to the replication factor A protein 3 family. In terms of assembly, component of the heterotrimeric canonical replication protein A complex (RPA).

The protein resides in the nucleus. In terms of biological role, as part of the replication protein A (RPA/RP-A), a single-stranded DNA-binding heterotrimeric complex, may play an essential role in DNA replication, recombination and repair. Binds and stabilizes single-stranded DNA intermediates, preventing complementary DNA reannealing and recruiting different proteins involved in DNA metabolism. In Schizosaccharomyces pombe (strain 972 / ATCC 24843) (Fission yeast), this protein is Replication factor A protein 3 (ssb3).